A 160-amino-acid polypeptide reads, in one-letter code: Nucleotide-binding protein Bpet3698 (160 aa).

It belongs to the YajQ family.

Nucleotide-binding protein. In Bordetella petrii (strain ATCC BAA-461 / DSM 12804 / CCUG 43448), this protein is Nucleotide-binding protein Bpet3698.